The chain runs to 473 residues: Putative tyrosine recombinase XerC (473 aa).

In terms of domain architecture, Core-binding (CB) spans 4–82 (MTLPELTQEY…HLRTVYRYAM (79 aa)). A Tyr recombinase domain is found at 118 to 305 (RNWLRFLVQE…DYDLMREVMN (188 aa)). Catalysis depends on residues Arg-156, Lys-183, His-256, Arg-259, and His-283. The active-site O-(3'-phospho-DNA)-tyrosine intermediate is the Tyr-292. Over residues 341–352 (SGTELQPATTES) the composition is skewed to polar residues. The segment at 341–365 (SGTELQPATTESSEAKKADDTASNP) is disordered.

This sequence belongs to the 'phage' integrase family.

The protein localises to the cytoplasm. Its function is as follows. Site-specific tyrosine recombinase, which acts by catalyzing the cutting and rejoining of the recombining DNA molecules. The chain is Putative tyrosine recombinase XerC from Pseudomonas syringae.